Here is a 519-residue protein sequence, read N- to C-terminus: Circadian clock oscillator protein KaiC (519 aa).

2 consecutive KaiC domains span residues 1–246 (MSEK…VNIF) and 260–519 (VRVS…GSDS). Residues Gly48, Thr49, Gly50, Lys51, Thr52, Leu53, Lys223, Leu224, Arg225, Thr227, His229, Thr239, Thr289, Gly290, Thr291, Gly292, Lys293, Thr294, and Leu295 each coordinate ATP. Thr52 provides a ligand contact to Mg(2+). Thr294 serves as a coordination point for Mg(2+). Mg(2+) is bound at residue Glu317. Position 330 (Trp330) interacts with ATP. Ser430 bears the Phosphoserine; by autocatalysis mark. Thr431 carries the post-translational modification Phosphothreonine; by autocatalysis. The ATP site is built by Arg450, Lys456, Met457, Arg458, Ser460, His462, and Lys464.

The protein belongs to the KaiC family. As to quaternary structure, homohexamer; hexamerization is dependent on ATP-binding. The KaiABC complex composition changes during the circadian cycle to control KaiC phosphorylation. Complexes KaiC(6), KaiA(2-4):KaiC(6), KaiB(6):KaiC(6) and KaiC(6):KaiB(6):KaiA(12) are among the most important forms, many form cooperatively. KaiC interacts with SasA, activating its autokinase function and leading to RpaA activation. Mg(2+) serves as cofactor. In terms of processing, phosphorylated on serine and threonine residues by autocatalysis. Has a 4 step phosphorylation cycle; the autokinase acts first on Thr-431, then Ser-430. When Ser-430 is modified KaiC switches to an autophosphatase mode, acting first on phospho-Thr-431 then phospho-Ser-430.

It catalyses the reaction L-seryl-[protein] + ATP = O-phospho-L-seryl-[protein] + ADP + H(+). It carries out the reaction L-threonyl-[protein] + ATP = O-phospho-L-threonyl-[protein] + ADP + H(+). The enzyme catalyses ATP + H2O = ADP + phosphate + H(+). With respect to regulation, the interaction with KaiA enhances its phosphorylation status, while the interaction with KaiB decreases it. Its function is as follows. Central component of the KaiABC oscillator complex, which constitutes the main circadian regulator in cyanobacteria. Complex composition changes during the circadian cycle to control KaiC phosphorylation. KaiA stimulates KaiC autophosphorylation, while KaiB sequesters KaiA, leading to KaiC autodephosphorylation. Clock output pathways impact the RpaA transcriptional regulator. KaiC enhances the autophosphorylation activity of SasA, which then transfers its phosphate group to RpaA to activate it. KaiB and KaiC together enhance the phospho-RpaA dephosphatase activity of CikA. In terms of biological role, has a weak, temperature-independent ATPase activity; ATPase activity defines the circadian period. The phosphorylation state of KaiC modulates its ATPase activity and effects KaiB binding. The sequence is that of Circadian clock oscillator protein KaiC from Nostoc sp. (strain PCC 7120 / SAG 25.82 / UTEX 2576).